The following is a 516-amino-acid chain: Chromosomal replication initiator protein DnaA (516 aa).

Residues 1–72 (MSLEHWNLCL…LLSEFAGDDL (72 aa)) form a domain I, interacts with DnaA modulators region. A domain II region spans residues 72-179 (LAPALKLAVK…QVEGGINHGA (108 aa)). The tract at residues 180–396 (NLNNSFTFDN…GALKRVIANS (217 aa)) is domain III, AAA+ region. Residues Gly224, Gly226, Lys227, and Thr228 each contribute to the ATP site. The segment at 397–516 (HFTGRAITPD…YKQLMRILTT (120 aa)) is domain IV, binds dsDNA.

The protein belongs to the DnaA family. As to quaternary structure, oligomerizes as a right-handed, spiral filament on DNA at oriC.

Its subcellular location is the cytoplasm. In terms of biological role, plays an essential role in the initiation and regulation of chromosomal replication. ATP-DnaA binds to the origin of replication (oriC) to initiate formation of the DNA replication initiation complex once per cell cycle. Binds the DnaA box (a 9 base pair repeat at the origin) and separates the double-stranded (ds)DNA. Forms a right-handed helical filament on oriC DNA; dsDNA binds to the exterior of the filament while single-stranded (ss)DNA is stabiized in the filament's interior. The ATP-DnaA-oriC complex binds and stabilizes one strand of the AT-rich DNA unwinding element (DUE), permitting loading of DNA polymerase. After initiation quickly degrades to an ADP-DnaA complex that is not apt for DNA replication. Binds acidic phospholipids. This is Chromosomal replication initiator protein DnaA from Marinomonas sp. (strain MWYL1).